The sequence spans 449 residues: Trigger factor (449 aa).

One can recognise a PPIase FKBP-type domain in the interval 173–258 (GDRVTLDFVG…LKKVEWAHLP (86 aa)).

Belongs to the FKBP-type PPIase family. Tig subfamily.

The protein localises to the cytoplasm. It carries out the reaction [protein]-peptidylproline (omega=180) = [protein]-peptidylproline (omega=0). Functionally, involved in protein export. Acts as a chaperone by maintaining the newly synthesized protein in an open conformation. Functions as a peptidyl-prolyl cis-trans isomerase. This is Trigger factor from Cupriavidus metallidurans (strain ATCC 43123 / DSM 2839 / NBRC 102507 / CH34) (Ralstonia metallidurans).